A 547-amino-acid polypeptide reads, in one-letter code: Chaperonin GroEL 1 (547 aa).

Residues 30–33, Lys-51, 87–91, Gly-415, and Asp-494 each bind ATP; these read TLGP and DGTTT. Positions 524–547 are disordered; the sequence is PKGKAKGGGAGAGMPDYGGDDMDY.

It belongs to the chaperonin (HSP60) family. Forms a cylinder of 14 subunits composed of two heptameric rings stacked back-to-back. Interacts with the co-chaperonin GroES.

It is found in the cytoplasm. It catalyses the reaction ATP + H2O + a folded polypeptide = ADP + phosphate + an unfolded polypeptide.. Functionally, together with its co-chaperonin GroES, plays an essential role in assisting protein folding. The GroEL-GroES system forms a nano-cage that allows encapsulation of the non-native substrate proteins and provides a physical environment optimized to promote and accelerate protein folding. The protein is Chaperonin GroEL 1 of Myxococcus xanthus (strain DK1622).